A 639-amino-acid chain; its full sequence is Tetracycline resistance protein TetW (639 aa).

The tr-type G domain maps to 1-243 (MKIINIGILA…VTGLFQPIGE (243 aa)). Residues 10-17 (AHVDAGKT), 74-78 (DTPGH), and 128-131 (NKID) contribute to the GTP site.

It belongs to the TRAFAC class translation factor GTPase superfamily. Classic translation factor GTPase family. TetM/TetO subfamily.

Functionally, abolishes the inhibitory effect of tetracyclin on protein synthesis by a non-covalent modification of the ribosomes. The protein is Tetracycline resistance protein TetW (tetW) of Butyrivibrio fibrisolvens.